The chain runs to 338 residues: Lipoate-protein ligase A (338 aa).

One can recognise a BPL/LPL catalytic domain in the interval 29-216 (PATQRVLFLW…AFFSHYGERV (188 aa)). ATP is bound by residues Arg-71, 76 to 79 (GAVF), and Lys-134. (R)-lipoate is bound at residue Lys-134.

This sequence belongs to the LplA family. As to quaternary structure, monomer.

It localises to the cytoplasm. The enzyme catalyses L-lysyl-[lipoyl-carrier protein] + (R)-lipoate + ATP = N(6)-[(R)-lipoyl]-L-lysyl-[lipoyl-carrier protein] + AMP + diphosphate + H(+). The protein operates within protein modification; protein lipoylation via exogenous pathway; protein N(6)-(lipoyl)lysine from lipoate: step 1/2. It functions in the pathway protein modification; protein lipoylation via exogenous pathway; protein N(6)-(lipoyl)lysine from lipoate: step 2/2. Catalyzes both the ATP-dependent activation of exogenously supplied lipoate to lipoyl-AMP and the transfer of the activated lipoyl onto the lipoyl domains of lipoate-dependent enzymes. In Klebsiella pneumoniae (strain 342), this protein is Lipoate-protein ligase A.